A 279-amino-acid polypeptide reads, in one-letter code: NAD-dependent protein deacylase (279 aa).

The region spanning 20–272 is the Deacetylase sirtuin-type domain; that stretch reads RERLRQRIFF…PEFVEKLLKG (253 aa). An NAD(+)-binding site is contributed by 48–67; sequence GAGISAESGIRTFRAADGLW. Residues tyrosine 92 and arginine 95 each coordinate substrate. 129-132 serves as a coordination point for NAD(+); that stretch reads QNID. Catalysis depends on histidine 147, which acts as the Proton acceptor. Residues cysteine 155 and cysteine 174 each contribute to the Zn(2+) site. Residues 214 to 216, 240 to 242, and alanine 258 contribute to the NAD(+) site; these read GTS and NLE.

It belongs to the sirtuin family. Class III subfamily. Forms a 1:1 complex with acetyl-CoA synthetase (Acs). Requires Zn(2+) as cofactor.

It localises to the cytoplasm. The enzyme catalyses N(6)-acetyl-L-lysyl-[protein] + NAD(+) + H2O = 2''-O-acetyl-ADP-D-ribose + nicotinamide + L-lysyl-[protein]. It catalyses the reaction N(6)-succinyl-L-lysyl-[protein] + NAD(+) + H2O = 2''-O-succinyl-ADP-D-ribose + nicotinamide + L-lysyl-[protein]. The catalysed reaction is N(6)-(2-hydroxyisobutanoyl)-L-lysyl-[protein] + NAD(+) + H2O = 2''-O-(2-hydroxyisobutanoyl)-ADP-D-ribose + nicotinamide + L-lysyl-[protein]. Its activity is regulated as follows. Deacetylation is inhibited by nicotinamide. NAD-dependent lysine deacetylase that specifically removes acetyl groups on target proteins. Also acts as a protein-lysine deacylase by mediating protein desuccinylation and de-2-hydroxyisobutyrylation. Modulates the activities of several proteins which are inactive in their acylated form. Activates the enzyme acetyl-CoA synthetase (acs) by deacetylating 'Lys-609' in the inactive, acetylated form of the enzyme. May also modulate the activity of other propionyl-adenosine monophosphate (AMP)-forming enzymes. The sequence is that of NAD-dependent protein deacylase from Escherichia coli (strain K12).